Here is a 91-residue protein sequence, read N- to C-terminus: DNA-binding protein HU (91 aa).

Belongs to the bacterial histone-like protein family.

Histone-like DNA-binding protein which is capable of wrapping DNA to stabilize it, and thus to prevent its denaturation under extreme environmental conditions. Also seems to act as a fortuitous virulence factor in delayed sequelae by binding to heparan sulfate-proteoglycans in the extracellular matrix of target organs and acting as a nidus for in situ immune complex formation. This chain is DNA-binding protein HU (hup), found in Streptococcus downei (Streptococcus sobrinus).